A 351-amino-acid polypeptide reads, in one-letter code: tRNA (guanine(10)-N2)-dimethyltransferase (351 aa).

The THUMP domain occupies 57–165 (EGHRIIFRYN…ENTFFISNVL (109 aa)).

The protein belongs to the methyltransferase superfamily. Trm-G10 family. Monomer.

The protein localises to the cytoplasm. The enzyme catalyses guanosine(10) in tRNA + 2 S-adenosyl-L-methionine = N(2)-dimethylguanosine(10) in tRNA + 2 S-adenosyl-L-homocysteine + 2 H(+). Catalyzes the adenosylmethionine-dependent methylation of the exocyclic amino group (N(2)) of guanosine at position 10 of various tRNAs. Acts via a two-step process that leads to the formation of either N(2)-monomethyl (m(2)G) or N(2)-dimethylguanosine (m(2)(2)G). This is tRNA (guanine(10)-N2)-dimethyltransferase (trmG10) from Methanocaldococcus jannaschii (strain ATCC 43067 / DSM 2661 / JAL-1 / JCM 10045 / NBRC 100440) (Methanococcus jannaschii).